Consider the following 957-residue polypeptide: SH3 domain-binding protein 4-B (957 aa).

In terms of domain architecture, SH3 1 spans 54–113; sequence ENVKEVVAIKDYCPNNFTTLKFSKGEHLYVLDASGGDWWYAHNTTEMGYIPSSYVQPLNY. The ZU5 domain maps to 312-449; it reads TSIVCRLDSS…LEPVMYVVMV (138 aa). The SH3 2 domain occupies 649–719; sequence TSLKYGKLIK…HAKNVLVVGK (71 aa).

Homodimer or homooligomer.

It is found in the membrane. The protein resides in the clathrin-coated pit. Its subcellular location is the cytoplasmic vesicle. The protein localises to the clathrin-coated vesicle. It localises to the nucleus. In terms of biological role, possible role in regulating endocytosis of the transferrin receptor at the plasma membrane. Alternatively, may function as a negative regulator of the amino acid-induced TOR signaling by inhibiting the formation of active Rag GTPase complexes. Preferentially binds inactive Rag GTPase complexes and prevents their interaction with the mTORC1 complex inhibiting its relocalization to lysosomes and its activation. Thereby, may indirectly regulate cell growth, proliferation and autophagy. The polypeptide is SH3 domain-binding protein 4-B (sh3bp4-b) (Xenopus laevis (African clawed frog)).